We begin with the raw amino-acid sequence, 197 residues long: Prefoldin subunit 3 (197 aa).

The residue at position 2 (Ala2) is an N-acetylalanine. Position 59 is an N6-acetyllysine (Lys59).

The protein belongs to the prefoldin subunit alpha family. In terms of assembly, heterohexamer of two PFD-alpha type and four PFD-beta type subunits. Binds to the C-terminal part of VHL.

It localises to the cytoplasm. The protein localises to the nucleus. In terms of biological role, binds specifically to cytosolic chaperonin (c-CPN) and transfers target proteins to it. Binds to nascent polypeptide chain and promotes folding in an environment in which there are many competing pathways for nonnative proteins. The protein is Prefoldin subunit 3 (VBP1) of Bos taurus (Bovine).